The following is a 213-amino-acid chain: Negative modulator of initiation of replication (213 aa).

Interaction with DNA regions lie at residues 116-117 (AV), 145-149 (RTRVY), and 179-185 (NTNSGRK).

It belongs to the SeqA family. As to quaternary structure, homodimer. Polymerizes to form helical filaments.

The protein localises to the cytoplasm. In terms of biological role, negative regulator of replication initiation, which contributes to regulation of DNA replication and ensures that replication initiation occurs exactly once per chromosome per cell cycle. Binds to pairs of hemimethylated GATC sequences in the oriC region, thus preventing assembly of replication proteins and re-initiation at newly replicated origins. Repression is relieved when the region becomes fully methylated. This is Negative modulator of initiation of replication from Haemophilus parainfluenzae (strain T3T1).